The chain runs to 473 residues: Cysteine--tRNA ligase (473 aa).

Position 28 (C28) interacts with Zn(2+). Residues 30–40 (PTVYNMPHIGN) carry the 'HIGH' region motif. Zn(2+)-binding residues include C213, H238, and E242. Positions 270 to 274 (KMSKS) match the 'KMSKS' region motif. K273 serves as a coordination point for ATP.

This sequence belongs to the class-I aminoacyl-tRNA synthetase family. Zn(2+) serves as cofactor.

The protein resides in the cytoplasm. The catalysed reaction is tRNA(Cys) + L-cysteine + ATP = L-cysteinyl-tRNA(Cys) + AMP + diphosphate. The sequence is that of Cysteine--tRNA ligase from Methanosarcina acetivorans (strain ATCC 35395 / DSM 2834 / JCM 12185 / C2A).